The following is a 189-amino-acid chain: MIFLYKIFGKWDPTEVEVKDLGIKRYVSLTPVIVPHSSGKHARQQFNKSEISIVERLANNLMRTETNTGKKQVTLRAVEEAFDIVNKKTKQNPIQVLVDAIANAGPREEVVRLKYGGISVPKAVDTAPQRRVDTALRYISMGTNAAAFKSKRSVAECLATELIGAANRDTKSFSINRKDAKERVAKAAR.

The protein belongs to the universal ribosomal protein uS7 family. Part of the 30S ribosomal subunit.

Its function is as follows. One of the primary rRNA binding proteins, it binds directly to 16S rRNA where it nucleates assembly of the head domain of the 30S subunit. Is located at the subunit interface close to the decoding center. The sequence is that of Small ribosomal subunit protein uS7 from Methanosarcina acetivorans (strain ATCC 35395 / DSM 2834 / JCM 12185 / C2A).